A 783-amino-acid polypeptide reads, in one-letter code: MTSQAIQLIDVNKEYNKESLEYFKQCVGTRDVGFNYHVISVFGSQSSGKSTLLNILFNTQFDTMDAQVKRQQTTKGIWLAHTQNVNNHKSTTDTDSDYFILDVEGSDGAERGEDQDFERKAALFAISVSEVLIVNMWEQQIGLYQGNNMGLLKTVFEVNLSLFGKRGNDHKVLLLFVIRDHVGVTPLKSLQESLITELEQIWSELNKPTGCEETTLYDFFDLEFKGLGHKLLQEEQFYDDVKSLGDSFIDSESNEYLLKPNYHHKLPIDGWNMYAEQCWEQIENNRDLDLPTQQILVARFKTEDIANEAYAKFTEEYETETEKRINDKTELVSYLKKIKDECLGEYDEHASRYAKAVYEEKRIELVDKVNERLFTTASKYLDMLTAVLLTKLENGMKEKENIKLPFEDRYLKLFKDIEAEFDAAITEFFSKDLLTKIKDFELKFAADVHEKKLQLRESELNALLSKIKKQLTLRIKDEEIELLSKPTPDLWDKVTDTFENIMKKTLSRFATGEGEYEFKMGLSEDENKKQYHAIRAFAWTLLETVVHDYLKEDTIVSLLRDRFESKFRYDSNDVPRLWKNEDEIDQSFRVAKEHALEILDILTLAVKTDGTEVIPDAFEDEPNEGLIYDDSHDVYHSNRFAHILNETQKEKVQQQFRRQINVTVLDCKRSIVTSSTHIPIWIYAVIVVLGWNEFMIVIRNPLFVTLALLSIVSFYFIQKFGLWGPVMNVVNTALGESRTTIKEKLRQFVLEEHELKKTAKVEEEIELQDLSKNSSSSGNEDSD.

Over 1–677 (MTSQAIQLID…KRSIVTSSTH (677 aa)) the chain is Cytoplasmic. A GB1/RHD3-type G domain is found at 33 to 265 (GFNYHVISVF…YLLKPNYHHK (233 aa)). 43–50 (GSQSSGKS) contributes to the GTP binding site. A coiled-coil region spans residues 449–472 (HEKKLQLRESELNALLSKIKKQLT). A helical membrane pass occupies residues 678-698 (IPIWIYAVIVVLGWNEFMIVI). Residues 699-701 (RNP) are Lumenal-facing. A helical transmembrane segment spans residues 702–722 (LFVTLALLSIVSFYFIQKFGL). Residues 723–783 (WGPVMNVVNT…SSSSGNEDSD (61 aa)) are Cytoplasmic-facing.

The protein belongs to the TRAFAC class dynamin-like GTPase superfamily. GB1/RHD3 GTPase family. RHD3 subfamily.

It is found in the endoplasmic reticulum membrane. In terms of biological role, cooperates with the reticulon proteins and tubule-shaping DP1 family proteins to generate and maintain the structure of the tubular endoplasmic reticulum network. Has GTPase activity, which is required for its function in ER organization. The polypeptide is Protein SEY1 (Candida glabrata (strain ATCC 2001 / BCRC 20586 / JCM 3761 / NBRC 0622 / NRRL Y-65 / CBS 138) (Yeast)).